The primary structure comprises 438 residues: Histidine--tRNA ligase (438 aa).

Belongs to the class-II aminoacyl-tRNA synthetase family. As to quaternary structure, homodimer.

It localises to the cytoplasm. The enzyme catalyses tRNA(His) + L-histidine + ATP = L-histidyl-tRNA(His) + AMP + diphosphate + H(+). In Thermobifida fusca (strain YX), this protein is Histidine--tRNA ligase (hisS).